We begin with the raw amino-acid sequence, 160 residues long: MDRSLQSTHAKLVARDIQRLTQSPTESNSFSLLGGACVSRVEIVGTIVSRDLTPKFLKFGVDDGTGCVTCVMWLNQLTSSYFSRWDPATILLLASAARKQAAQIRIGAVARVRGRVGSYRGVMQITANVAVAERDPNAEILHWLECLKLGQSCYRVRIQS.

The segment at residues 41 to 133 (VEIVGTIVSR…QITANVAVAE (93 aa)) is a DNA-binding region (OB).

This sequence belongs to the STN1 family. Component of the CST complex, composed of CTC1, TEN1 and STN1. Interacts with CTC1. Interacts with TEN1. Interacts with POT1A. In vitro interaction with TEN1 and POT1A is mutually exclusive, indicating that POT1A and TEN1 may compete for the same binding site. Widely expressed.

Its subcellular location is the nucleus. It localises to the chromosome. The protein localises to the telomere. Component of the CST complex, a complex that binds to single-stranded DNA and is required to protect telomeres from DNA degradation. The CST complex binds single-stranded DNA with high affinity in a sequence-independent manner, while isolated subunits bind DNA with low affinity by themselves. Associates with enzymatically active telomerase. Plays a genomewide role in DNA replication and facilitates re-replication at non-telomeric loci. This Arabidopsis thaliana (Mouse-ear cress) protein is CST complex subunit STN1.